We begin with the raw amino-acid sequence, 336 residues long: Oxaloacetate decarboxylase (336 aa).

The Pyruvate carboxyltransferase domain occupies 10–258 (PIVLDTTVRD…LAAVDLDRIF (249 aa)). Asp-19, His-197, and His-199 together coordinate Mn(2+).

It belongs to the 4-hydroxy-2-oxovalerate aldolase family. Homodimer. A divalent metal cation is required as a cofactor.

It catalyses the reaction oxaloacetate + H(+) = pyruvate + CO2. Its activity is regulated as follows. Activity is abolished upon incubation with Chelex and EDTA. Functionally, exhibits oxaloacetate decarboxylase activity. Lacks any detectable aldolase activity with 4-hydroxy-2-oxopentanoate (HOPA), 4-hydroxy-2-oxohexanoate (HOHA) or other 4-hydroxy-2-oxoacids. This Mycobacterium tuberculosis (strain ATCC 25618 / H37Rv) protein is Oxaloacetate decarboxylase.